Here is a 188-residue protein sequence, read N- to C-terminus: SAYSvFN domain-containing protein 1 (188 aa).

Over residues 1–10 the composition is skewed to basic and acidic residues; sequence MEQRLAEFRE. 2 disordered regions span residues 1 to 43 and 60 to 80; these read MEQR…ATPK and AIAQAQPNQPQEAGQQLPEST. Over 1–100 the chain is Cytoplasmic; that stretch reads MEQRLAEFRE…SFLTNITFLK (100 aa). Low complexity-rich tracts occupy residues 22–43 and 60–75; these read STSSQSVQTSGAKAEPAAATPK and AIAQAQPNQPQEAGQQ. The tract at residues 86–100 is middle helical (MH); sequence SSCRQSFLTNITFLK. Residues 101-121 constitute an intramembrane region (helical); it reads VLLWLVLLGLFVELEFGLAYF. At 122-188 the chain is on the cytoplasmic side; it reads VLSMFYWMYV…RTSPSCSSYP (67 aa).

It belongs to the SAYSD1 family. As to quaternary structure, associates (via N-terminus) with ribosomes. As to expression, enriched in testis; predominantly expressed in round and elongating spermatids.

The protein resides in the endoplasmic reticulum membrane. It localises to the cytoplasmic vesicle membrane. In terms of biological role, ufmylation 'reader' component of a translocation-associated quality control pathway, a mechanism that takes place when a ribosome has stalled during translation, and which is required to degrade clogged substrates. Specifically recognizes and binds ufmylated ribosomes when a ribosome has stalled, promoting the transport of stalled nascent chain via the TRAPP complex to lysosomes for degradation. In Mus musculus (Mouse), this protein is SAYSvFN domain-containing protein 1.